Reading from the N-terminus, the 351-residue chain is CREB homolog crh-2 (351 aa).

Disordered regions lie at residues 46–104 (EPCT…EPLG) and 119–149 (SPSATSSHSPSSYGMMHGSHSMASHQLHQQQ). Positions 82 to 95 (GSSSGSPSSSLSSP) are enriched in low complexity. The bZIP domain occupies 282–345 (SLKIVRRKIK…RDLQQKLHQY (64 aa)). The interval 284 to 304 (KIVRRKIKNKLSAQESRRKRK) is basic motif. Residues 307–314 (IDALEGRL) form a leucine-zipper region.

It belongs to the bZIP family.

Its subcellular location is the nucleus. Its function is as follows. Transcription factor. Plays a role in regulating the developmentally arrested larval state known as dauer, when induced by long-term exposure to the Gram-negative bacterium P.aeruginosa PAO1, but dispensable for dauer formation induced by starvation. Involved in regulating expression of microRNA mir-243, during long-term exposure to P.aeruginosa PAO1. This Caenorhabditis elegans protein is CREB homolog crh-2.